We begin with the raw amino-acid sequence, 138 residues long: Cysteine desulfuration protein SufE (138 aa).

Cysteine 51 serves as the catalytic Cysteine persulfide intermediate.

It belongs to the SufE family. Homodimer. Interacts with SufS.

Its subcellular location is the cytoplasm. It participates in cofactor biosynthesis; iron-sulfur cluster biosynthesis. Participates in cysteine desulfuration mediated by SufS. Cysteine desulfuration mobilizes sulfur from L-cysteine to yield L-alanine and constitutes an essential step in sulfur metabolism for biosynthesis of a variety of sulfur-containing biomolecules. Functions as a sulfur acceptor for SufS, by mediating the direct transfer of the sulfur atom from the S-sulfanylcysteine of SufS, an intermediate product of cysteine desulfuration process. This chain is Cysteine desulfuration protein SufE, found in Salmonella arizonae (strain ATCC BAA-731 / CDC346-86 / RSK2980).